The chain runs to 384 residues: DNA dC-&gt;dU-editing enzyme APOBEC-3G (384 aa).

Residues 1–60 (MKPHFRNPVERMYQDTFSDNFYNRPILSHRNTVWLCYEVKTKGPSRPPLDAKIFRGQVYS) are essential for cytoplasmic localization. 2 consecutive CMP/dCMP-type deaminase domains span residues 29–138 (HRNT…LRSL) and 214–328 (GRHE…LRTL). Threonine 32 is subject to Phosphothreonine; by PKA. The Zn(2+) site is built by histidine 65, cysteine 97, and cysteine 100. Residues 209-336 (ELWVRGRHET…TLAKAGAKIS (128 aa)) are necessary for homooligomerization. An interaction with DNA region spans residues 213–215 (RGR). Threonine 218 bears the Phosphothreonine; by PKA and CAMK2 mark. Histidine 257 provides a ligand contact to Zn(2+). Residue glutamate 259 is the Proton donor of the active site. Positions 288 and 291 each coordinate Zn(2+). The segment at 313–320 (RIYDDQGR) is interaction with DNA.

The protein belongs to the cytidine and deoxycytidylate deaminase family. In terms of assembly, homodimer. Homooligomer. Can bind RNA to form ribonucleoprotein complexes of high-molecular-mass (HMM) or low-molecular-mass (LMM). HMM is inactive and heterogeneous in protein composition because of binding nonselectively to cellular RNAs, which in turn are associated with variety of cellular proteins. The LMM form which is enzymatically active has few or no RNAs associated. Its ability to form homooligomer is distinct from its ability to assemble into HMM. Interacts with APOBEC3B, APOBEC3F, MOV10, AGO2, EIF4E, EIF4ENIF1, DCP2 and DDX6 in an RNA-dependent manner. Interacts with AGO1, AGO3 and PKA/PRKACA. The cofactor is Zn(2+).

Its subcellular location is the cytoplasm. It is found in the nucleus. The protein localises to the P-body. It carries out the reaction a 2'-deoxycytidine in single-stranded DNA + H2O + H(+) = a 2'-deoxyuridine in single-stranded DNA + NH4(+). Functionally, DNA deaminase (cytidine deaminase) which acts as an inhibitor of retrovirus replication and retrotransposon mobility via deaminase-dependent and -independent mechanisms. Exhibits antiviral activity against vif-deficient: HIV-1 and simian immunodeficiency viruses (SIVs) and also against simian foamy virus (SFV). After the penetration of retroviral nucleocapsids into target cells of infection and the initiation of reverse transcription, it can induce the conversion of cytosine to uracil in the minus-sense single-strand viral DNA, leading to G-to-A hypermutations in the subsequent plus-strand viral DNA. The resultant detrimental levels of mutations in the proviral genome, along with a deamination-independent mechanism that works prior to the proviral integration, together exert efficient antiretroviral effects in infected target cells. Selectively targets single-stranded DNA and does not deaminate double-stranded DNA or single- or double-stranded RNA. May inhibit the mobility of LTR retrotransposons. This is DNA dC-&gt;dU-editing enzyme APOBEC-3G (APOBEC3G) from Pan troglodytes (Chimpanzee).